The following is a 362-amino-acid chain: MNSRVFNFGAGPAMLPEEILKEAQEEFLNWRNTGMSILEIGHRTPEIISLLSTAEQSLRELLNIPKNYHVLFLGGAARAQFAMIPMNLLRPGDDAAYFITGIWSKMAYHEANLLKKAYYLSSEEKEGFVSIPDYQKWELKSNTAYVYYTPNETINGVRFPYVPKTEGVPLVADMTSCLLSEPINIRQYGLIFAGAQKNIANAGLTVVIIHEELLQNQPEPVIPTMLNYKNHADHRSLYATPPVFNCYLASKMFEWIKKQGGIEELFQRNCLKAAKLYQYLDSTDFYLTPVSKEARSIMNVCFSLYYPDLEQKFLDMANERGLKALKGHRFTGGLRASLYNAMPMAGVDALIEFMSEFAKENG.

Arginine 43 contacts L-glutamate. Pyridoxal 5'-phosphate is bound by residues 77–78 (AR), tryptophan 103, threonine 153, aspartate 173, and glutamine 196. Lysine 197 is modified (N6-(pyridoxal phosphate)lysine).

It belongs to the class-V pyridoxal-phosphate-dependent aminotransferase family. SerC subfamily. As to quaternary structure, homodimer. It depends on pyridoxal 5'-phosphate as a cofactor.

The protein resides in the cytoplasm. The enzyme catalyses O-phospho-L-serine + 2-oxoglutarate = 3-phosphooxypyruvate + L-glutamate. It carries out the reaction 4-(phosphooxy)-L-threonine + 2-oxoglutarate = (R)-3-hydroxy-2-oxo-4-phosphooxybutanoate + L-glutamate. The protein operates within amino-acid biosynthesis; L-serine biosynthesis; L-serine from 3-phospho-D-glycerate: step 2/3. It functions in the pathway cofactor biosynthesis; pyridoxine 5'-phosphate biosynthesis; pyridoxine 5'-phosphate from D-erythrose 4-phosphate: step 3/5. Functionally, catalyzes the reversible conversion of 3-phosphohydroxypyruvate to phosphoserine and of 3-hydroxy-2-oxo-4-phosphonooxybutanoate to phosphohydroxythreonine. The protein is Phosphoserine aminotransferase of Legionella pneumophila subsp. pneumophila (strain Philadelphia 1 / ATCC 33152 / DSM 7513).